Here is a 193-residue protein sequence, read N- to C-terminus: Peptidyl-tRNA hydrolase (193 aa).

Tyr-16 contacts tRNA. The active-site Proton acceptor is His-21. Residues Phe-66, Asn-68, and Asn-114 each contribute to the tRNA site.

This sequence belongs to the PTH family. Monomer.

The protein resides in the cytoplasm. It catalyses the reaction an N-acyl-L-alpha-aminoacyl-tRNA + H2O = an N-acyl-L-amino acid + a tRNA + H(+). Functionally, hydrolyzes ribosome-free peptidyl-tRNAs (with 1 or more amino acids incorporated), which drop off the ribosome during protein synthesis, or as a result of ribosome stalling. Its function is as follows. Catalyzes the release of premature peptidyl moieties from peptidyl-tRNA molecules trapped in stalled 50S ribosomal subunits, and thus maintains levels of free tRNAs and 50S ribosomes. In Trichlorobacter lovleyi (strain ATCC BAA-1151 / DSM 17278 / SZ) (Geobacter lovleyi), this protein is Peptidyl-tRNA hydrolase.